The sequence spans 286 residues: Formamidopyrimidine-DNA glycosylase (286 aa).

Catalysis depends on Pro2, which acts as the Schiff-base intermediate with DNA. The active-site Proton donor is the Glu3. Lys61 acts as the Proton donor; for beta-elimination activity in catalysis. Positions 103, 122, and 164 each coordinate DNA. The FPG-type zinc finger occupies 250-284 (NAYAQTGEPCGRCGTLIIRESFMNRGSHYCPNCQK). Residue Arg274 is the Proton donor; for delta-elimination activity of the active site.

This sequence belongs to the FPG family. As to quaternary structure, monomer. Requires Zn(2+) as cofactor.

The catalysed reaction is Hydrolysis of DNA containing ring-opened 7-methylguanine residues, releasing 2,6-diamino-4-hydroxy-5-(N-methyl)formamidopyrimidine.. It carries out the reaction 2'-deoxyribonucleotide-(2'-deoxyribose 5'-phosphate)-2'-deoxyribonucleotide-DNA = a 3'-end 2'-deoxyribonucleotide-(2,3-dehydro-2,3-deoxyribose 5'-phosphate)-DNA + a 5'-end 5'-phospho-2'-deoxyribonucleoside-DNA + H(+). Its function is as follows. Involved in base excision repair of DNA damaged by oxidation or by mutagenic agents. Acts as a DNA glycosylase that recognizes and removes damaged bases. Has a preference for oxidized purines, such as 7,8-dihydro-8-oxoguanine (8-oxoG). Has AP (apurinic/apyrimidinic) lyase activity and introduces nicks in the DNA strand. Cleaves the DNA backbone by beta-delta elimination to generate a single-strand break at the site of the removed base with both 3'- and 5'-phosphates. The chain is Formamidopyrimidine-DNA glycosylase from Corynebacterium glutamicum (strain ATCC 13032 / DSM 20300 / JCM 1318 / BCRC 11384 / CCUG 27702 / LMG 3730 / NBRC 12168 / NCIMB 10025 / NRRL B-2784 / 534).